The chain runs to 188 residues: Adenine phosphoribosyltransferase (188 aa).

This sequence belongs to the purine/pyrimidine phosphoribosyltransferase family. As to quaternary structure, homodimer.

It is found in the cytoplasm. The enzyme catalyses AMP + diphosphate = 5-phospho-alpha-D-ribose 1-diphosphate + adenine. The protein operates within purine metabolism; AMP biosynthesis via salvage pathway; AMP from adenine: step 1/1. In terms of biological role, catalyzes a salvage reaction resulting in the formation of AMP, that is energically less costly than de novo synthesis. The protein is Adenine phosphoribosyltransferase of Burkholderia thailandensis (strain ATCC 700388 / DSM 13276 / CCUG 48851 / CIP 106301 / E264).